The sequence spans 474 residues: ATP synthase subunit beta (474 aa).

Residue 152–159 (GGAGVGKT) participates in ATP binding.

This sequence belongs to the ATPase alpha/beta chains family. F-type ATPases have 2 components, CF(1) - the catalytic core - and CF(0) - the membrane proton channel. CF(1) has five subunits: alpha(3), beta(3), gamma(1), delta(1), epsilon(1). CF(0) has three main subunits: a(1), b(2) and c(9-12). The alpha and beta chains form an alternating ring which encloses part of the gamma chain. CF(1) is attached to CF(0) by a central stalk formed by the gamma and epsilon chains, while a peripheral stalk is formed by the delta and b chains.

Its subcellular location is the cell inner membrane. The catalysed reaction is ATP + H2O + 4 H(+)(in) = ADP + phosphate + 5 H(+)(out). In terms of biological role, produces ATP from ADP in the presence of a proton gradient across the membrane. The catalytic sites are hosted primarily by the beta subunits. The polypeptide is ATP synthase subunit beta (Magnetococcus marinus (strain ATCC BAA-1437 / JCM 17883 / MC-1)).